Consider the following 610-residue polypeptide: MPEYRSKTSTYGRNMAGARALWRATGMKDDDFQKPIIAIANSFTQFVPGHVHLKDLGQLVAREIERLGGVAKEFNTIAVDDGIAMGHDGMLYSLPSREIIADSVEYMANAHCADALVCISNCDKITPGMLMASLRLNIPTVFVSGGPMEAGKTKLTDHKLDLVDAMVLAADPHASDEEVAAVERSACPTCGSCSGMFTANSMNCLTEALGLSLPGNGTVVATHSDRKQLFLNAGRTVIELCHRWYGNEDATALPRGIATFAAFENAITLDIAMGGSTNTILHLLAAAQEAEVPFTMQDIDRLSRNVPQLCKVAPNTQKYHIEDVHRAGGIFGILAELARGNLLHTDVATVHSKTLGEAIATWDIIGTQDEAVHTFYKAGPAGISTQVAFSQSTRWPSLDTDRTEGCIRDMEHAFSKEGGLAVLYGNIAQDGCVVKTAGVDASIHVFEGSALVYESQEAAVKGILSDEVQPGMIVVIRYEGPKGGPGMQEMLYPTSYLKSKGLGKQCALFTDGRFSGGTSGLSIGHASPEAAAGGAIGLIRDGDRIRIDIPQRAINVLISEEELASRRLEQHAIGWKPAQSRTRKVSSALKAYALLATSADKGAVRNKTLL.

Asp-81 is a Mg(2+) binding site. A [2Fe-2S] cluster-binding site is contributed by Cys-122. 2 residues coordinate Mg(2+): Asp-123 and Lys-124. An N6-carboxylysine modification is found at Lys-124. Cys-193 provides a ligand contact to [2Fe-2S] cluster. Glu-489 contributes to the Mg(2+) binding site. The active-site Proton acceptor is the Ser-515.

This sequence belongs to the IlvD/Edd family. Homodimer. [2Fe-2S] cluster is required as a cofactor. The cofactor is Mg(2+).

The enzyme catalyses (2R)-2,3-dihydroxy-3-methylbutanoate = 3-methyl-2-oxobutanoate + H2O. It catalyses the reaction (2R,3R)-2,3-dihydroxy-3-methylpentanoate = (S)-3-methyl-2-oxopentanoate + H2O. Its pathway is amino-acid biosynthesis; L-isoleucine biosynthesis; L-isoleucine from 2-oxobutanoate: step 3/4. The protein operates within amino-acid biosynthesis; L-valine biosynthesis; L-valine from pyruvate: step 3/4. Functions in the biosynthesis of branched-chain amino acids. Catalyzes the dehydration of (2R,3R)-2,3-dihydroxy-3-methylpentanoate (2,3-dihydroxy-3-methylvalerate) into 2-oxo-3-methylpentanoate (2-oxo-3-methylvalerate) and of (2R)-2,3-dihydroxy-3-methylbutanoate (2,3-dihydroxyisovalerate) into 2-oxo-3-methylbutanoate (2-oxoisovalerate), the penultimate precursor to L-isoleucine and L-valine, respectively. The protein is Dihydroxy-acid dehydratase of Xylella fastidiosa (strain 9a5c).